The primary structure comprises 65 residues: Prokaryotic ubiquitin-like protein Pup (65 aa).

The segment at 1–38 (MANAQQQVFGGGGGDDAENNDAPQQGSGTQQVNVTGTD) is disordered. Residues 21 to 59 (DAPQQGSGTQQVNVTGTDDLLDEIDGLLETNAEEFVRSY) are ARC ATPase binding. The span at 22–34 (APQQGSGTQQVNV) shows a compositional bias: polar residues. Gln-65 carries the deamidated glutamine modification. An Isoglutamyl lysine isopeptide (Gln-Lys) (interchain with K-? in acceptor proteins) cross-link involves residue Gln-65.

It belongs to the prokaryotic ubiquitin-like protein family. Strongly interacts with the proteasome-associated ATPase ARC through a hydrophobic interface; the interacting region of Pup lies in its C-terminal half. There is one Pup binding site per ARC hexamer ring. In terms of processing, is modified by deamidation of its C-terminal glutamine to glutamate by the deamidase Dop, a prerequisite to the subsequent pupylation process.

It participates in protein degradation; proteasomal Pup-dependent pathway. Protein modifier that is covalently attached to lysine residues of substrate proteins, thereby targeting them for proteasomal degradation. The tagging system is termed pupylation. The chain is Prokaryotic ubiquitin-like protein Pup from Corynebacterium urealyticum (strain ATCC 43042 / DSM 7109).